The primary structure comprises 157 residues: Protein E6 (157 aa).

2 zinc fingers span residues C41–C77 and C114–C150.

This sequence belongs to the papillomaviridae E6 protein family. Forms homodimers. Interacts with ubiquitin-protein ligase UBE3A/E6-AP; this interaction stimulates UBE3A ubiquitin activity. Interacts with host BAK1.

Its subcellular location is the host cytoplasm. It is found in the host nucleus. Functionally, plays a major role in the induction and maintenance of cellular transformation. E6 associates with host UBE3A/E6-AP ubiquitin-protein ligase and modulates its activity. Protects host keratinocytes from apoptosis by mediating the degradation of host BAK1. May also inhibit host immune response. This Human papillomavirus 36 protein is Protein E6.